We begin with the raw amino-acid sequence, 108 residues long: MAGKTVTRADLSEAVYQQVGLSRAESAALVETVLGEICNCLSSGETVKLSSFGSFVVRSKGKRIGRNPKTGVEVEIEPRQVMVFKPSNVLKARINGGHVNGLDADEDE.

This sequence belongs to the bacterial histone-like protein family. Heterodimer of an alpha and a beta chain.

In terms of biological role, this protein is one of the two subunits of integration host factor, a specific DNA-binding protein that functions in genetic recombination as well as in transcriptional and translational control. The polypeptide is Integration host factor subunit alpha (Methylorubrum populi (strain ATCC BAA-705 / NCIMB 13946 / BJ001) (Methylobacterium populi)).